The sequence spans 766 residues: Flocculation suppression protein (766 aa).

Disordered stretches follow at residues 1–52 (MSEE…HGSK), 129–181 (HDHS…PTKI), 203–247 (KRRA…SSNS), 547–619 (KPVP…SISG), and 657–766 (SVTP…KVKM). 2 stretches are compositionally biased toward low complexity: residues 8 to 19 (SAPAPASTPAPA) and 134 to 147 (NDAN…TNDD). The DNA-binding element occupies 64 to 186 (IFIHKLYQIL…NPTKIWEFKH (123 aa)). Positions 171–181 (QEKEKSNPTKI) are enriched in basic and acidic residues. Residues 208–224 (SRNNSSINSRKNSSNQN) show a composition bias toward low complexity. Ser220 carries the phosphoserine modification. The span at 236 to 247 (SSIQDPSTSSNS) shows a compositional bias: polar residues. Ser556 bears the Phosphoserine mark. Residues 679 to 699 (AVSSNLINSPMNVEHSSSLSQ) are compositionally biased toward polar residues. The segment covering 708-719 (LPQPSLPTTSTT) has biased composition (low complexity). Ser733 carries the phosphoserine modification. Polar residues predominate over residues 738–750 (LLNQEDSSTSSAD).

The protein in the N-terminal section; belongs to the HSF family.

The protein localises to the nucleus. In terms of biological role, involved in cell surface assembly and regulation of the gene related to flocculation (asexual cell aggregation). Mutations in SFL1 causes constitutive cell aggregation. This chain is Flocculation suppression protein (SFL1), found in Saccharomyces cerevisiae (strain ATCC 204508 / S288c) (Baker's yeast).